Reading from the N-terminus, the 216-residue chain is 3-keto-L-gulonate-6-phosphate decarboxylase UlaD (216 aa).

D11 lines the substrate pocket. 2 residues coordinate Mg(2+): E33 and D62. A substrate-binding site is contributed by R192.

The protein belongs to the HPS/KGPDC family. KGPDC subfamily. In terms of assembly, homodimer. Requires Mg(2+) as cofactor.

The catalysed reaction is 3-dehydro-L-gulonate 6-phosphate + H(+) = L-xylulose 5-phosphate + CO2. It participates in cofactor degradation; L-ascorbate degradation; D-xylulose 5-phosphate from L-ascorbate: step 2/4. Its function is as follows. Catalyzes the decarboxylation of 3-keto-L-gulonate-6-P into L-xylulose-5-P. Is involved in the anaerobic L-ascorbate utilization. The protein is 3-keto-L-gulonate-6-phosphate decarboxylase UlaD of Escherichia coli O139:H28 (strain E24377A / ETEC).